Reading from the N-terminus, the 207-residue chain is Cytochrome bo(3) ubiquinol oxidase subunit 3 (207 aa).

Residues M1 to Q26 lie on the Cytoplasmic side of the membrane. A helical transmembrane segment spans residues M27 to F47. At A48–D70 the chain is on the periplasmic side. A helical transmembrane segment spans residues F71–L91. Residues K92–A99 lie on the Cytoplasmic side of the membrane. A helical transmembrane segment spans residues G100–I120. The Periplasmic portion of the chain corresponds to Y121–G141. Residues F142–I162 form a helical membrane-spanning segment. At M163–L185 the chain is on the cytoplasmic side. The helical transmembrane segment at F186–V206 threads the bilayer. A topological domain (periplasmic) is located at residue L207.

Belongs to the cytochrome c oxidase subunit 3 family. As to quaternary structure, heterooctamer of two A chains, two B chains, two C chains and two D chains.

Its subcellular location is the cell inner membrane. In terms of biological role, cytochrome bo(3) ubiquinol terminal oxidase is the component of the aerobic respiratory chain of E.coli that predominates when cells are grown at high aeration. Has proton pump activity across the membrane in addition to electron transfer, pumping 2 protons/electron. This Pseudomonas putida (Arthrobacter siderocapsulatus) protein is Cytochrome bo(3) ubiquinol oxidase subunit 3 (cyoC).